The primary structure comprises 529 residues: MTLSPYLQEVAKRRTFAIISHPDAGKTTITEKVLLFGQAIQTAGTVKGRGSSQHAKSDWMEMEKQRGISITTSVMQFPYHDCLVNLLDTPGHEDFSEDTYRTLTAVDCCLMVIDAAKGVEDRTRKLMEVTRLRDTPILTFMNKLDRDIRDPMEVMDEVERELKIACAPITWPIGCGKLFKGVYHLYKDEVYLYQTGKGHTIQEVRIVKGLDNPELETAVGEELAVQLRDELELVKGASHEFDHELFLAGEITPVFFGTALGNFGVDHMLDGLIEWAPQPMPRKTDTRLVEASEEKFTGFVFKIQANMDPKHRDRVAFLRVVSGQYEKGMKLRQVRIGKDVVISDALTFMAGDRSHVEEAYPGDIIGLHNHGTIQIGDTFTQGEMMKFTGIPNFAPELFRRIRLRDPLKQKQLLKGLVQLSEEGAVQVFRPISNNDLIVGAVGVLQFDVVVARLKSEYNVEAIYESVNVATARWVECSDVKKFEEFKRKNEIQLALDGGDNLTYIAPTMVNLNLTQERYPDVQFRKTREH.

The tr-type G domain maps to 11 to 280 (AKRRTFAIIS…GLIEWAPQPM (270 aa)). GTP-binding positions include 20 to 27 (SHPDAGKT), 88 to 92 (DTPGH), and 142 to 145 (NKLD).

The protein belongs to the TRAFAC class translation factor GTPase superfamily. Classic translation factor GTPase family. PrfC subfamily.

It is found in the cytoplasm. Functionally, increases the formation of ribosomal termination complexes and stimulates activities of RF-1 and RF-2. It binds guanine nucleotides and has strong preference for UGA stop codons. It may interact directly with the ribosome. The stimulation of RF-1 and RF-2 is significantly reduced by GTP and GDP, but not by GMP. The polypeptide is Peptide chain release factor 3 (Enterobacter sp. (strain 638)).